The sequence spans 618 residues: Chaperone protein HscA homolog (618 aa).

The protein belongs to the heat shock protein 70 family.

In terms of biological role, chaperone involved in the maturation of iron-sulfur cluster-containing proteins. Has a low intrinsic ATPase activity which is markedly stimulated by HscB. This is Chaperone protein HscA homolog from Variovorax paradoxus (strain S110).